The sequence spans 156 residues: Small ribosomal subunit protein uS7 (156 aa).

This sequence belongs to the universal ribosomal protein uS7 family. In terms of assembly, part of the 30S ribosomal subunit. Contacts proteins S9 and S11.

Functionally, one of the primary rRNA binding proteins, it binds directly to 16S rRNA where it nucleates assembly of the head domain of the 30S subunit. Is located at the subunit interface close to the decoding center, probably blocks exit of the E-site tRNA. In Cupriavidus metallidurans (strain ATCC 43123 / DSM 2839 / NBRC 102507 / CH34) (Ralstonia metallidurans), this protein is Small ribosomal subunit protein uS7.